A 262-amino-acid polypeptide reads, in one-letter code: GTP cyclohydrolase 1 type 2 homolog (262 aa).

4 residues coordinate a divalent metal cation: histidine 65, aspartate 102, histidine 222, and glutamate 225.

The protein belongs to the GTP cyclohydrolase I type 2/NIF3 family. In terms of assembly, homohexamer.

This Streptococcus pyogenes serotype M3 (strain ATCC BAA-595 / MGAS315) protein is GTP cyclohydrolase 1 type 2 homolog.